The chain runs to 151 residues: Sperm surface protein Sp17 (151 aa).

A compositionally biased stretch (basic and acidic residues) spans 68–98; sequence FYNNHAFEEQEPPEKSDPKQEESQIPGKEEE. 2 disordered regions span residues 68–115 and 130–151; these read FYNN…EKEE and AREE…EENK. One can recognise an IQ domain in the interval 114–143; that stretch reads EEVAAVKIQAAFRGHVAREEVKKMKTDSLQ.

As to quaternary structure, homodimer. May interact with ROPN1. As to expression, testis- and sperm-specific.

It localises to the membrane. In terms of biological role, sperm surface zona pellucida binding protein. Helps to bind spermatozoa to the zona pellucida with high affinity. Might function in binding zona pellucida and carbohydrates. The protein is Sperm surface protein Sp17 (SPA17) of Macaca fascicularis (Crab-eating macaque).